The sequence spans 1311 residues: Transcriptional regulator ATRX homolog (1311 aa).

A disordered region spans residues 1 to 384; it reads MGKKNPNARH…KQKNKRKHIR (384 aa). Residues 28–40 show a composition bias toward basic and acidic residues; the sequence is SRRESATESKSAS. Residues 61–83 are compositionally biased toward low complexity; sequence KASGKATVSSSSDSDQAVANSSA. The segment covering 114–125 has biased composition (polar residues); that stretch reads RGSQQKNVTIND. Phosphoserine occurs at positions 126 and 127. A compositionally biased stretch (acidic residues) spans 155 to 166; that stretch reads SDSEEVDEEEES. Over residues 181–202 the composition is skewed to basic and acidic residues; the sequence is KPEKNSSKASKESIEKRQKAQK. Residues 219–237 show a composition bias toward low complexity; it reads RRGSLSSERSSRASSSRAE. Basic residues predominate over residues 241-265; it reads RPKRCVVRLKRVSLPKTKPAQKPKK. Phosphoserine is present on residues Ser-267, Ser-268, and Ser-270. Residues 290–306 show a composition bias toward acidic residues; it reads EADSDYEAPAAEEEEEE. Phosphoserine is present on residues Ser-336, Ser-338, Ser-342, and Ser-343. A compositionally biased stretch (basic and acidic residues) spans 336-351; it reads SESDKGSSDFEPEEKQ. Basic residues predominate over residues 352 to 361; sequence KKKGRKRIKK. Residues 476–664 enclose the Helicase ATP-binding domain; it reads ESQEKPGSGC…YCMIQFVKPN (189 aa). 489 to 496 is an ATP binding site; it reads HCMGLGKT. The DEGH box motif lies at 615 to 618; the sequence is DEGH. The disordered stretch occupies residues 837-878; it reads ASSGKVKKRKTRNGNAGGGDSDSDLEMLGGLGGGSSVQKDDP. Residues Ser-857 and Ser-859 each carry the phosphoserine modification. In terms of domain architecture, Helicase C-terminal spans 905–1085; that stretch reads RLLQQCEAIG…SRHYNQTDLM (181 aa). The tract at residues 1285-1311 is disordered; it reads MAGGSVAHGPPAAPAPGFEPDKVYEID.

Belongs to the SNF2/RAD54 helicase family.

Its subcellular location is the nucleus. It localises to the chromosome. It carries out the reaction ATP + H2O = ADP + phosphate + H(+). Global transcriptional regulator. Modifies gene expression by affecting chromatin. In Drosophila melanogaster (Fruit fly), this protein is Transcriptional regulator ATRX homolog (XNP).